Consider the following 307-residue polypeptide: MANITAAMVKALREKTGAGMMDCKKALVEAEGNEEKAVEILRKKGLAKAAKKADRNAAEGRVEIYISDDYKKGSIAEVNCETDFVAKTDEFIEFVSETVKTINVNDIADTEALNKAPFGAGTFEEELKVKIAKIGENIVVRRIGTIKAPENGIVNGYIHAGGKVGVLVAAACDSEKTCEAIKDTLRDIAMHIAAMKPQYLNPEAVPADVIEKEKEIAKAQLLKEGKPEQVIDKIIPGKIKRFYSDVCVTEQEYVKAEKKETVAEALSKAAKAAGGEAKLVDFIRFEVGEGLVKNACNMADEVAAALS.

Positions 82–85 (TDFV) are involved in Mg(2+) ion dislocation from EF-Tu.

The protein belongs to the EF-Ts family.

It localises to the cytoplasm. Functionally, associates with the EF-Tu.GDP complex and induces the exchange of GDP to GTP. It remains bound to the aminoacyl-tRNA.EF-Tu.GTP complex up to the GTP hydrolysis stage on the ribosome. In Nautilia profundicola (strain ATCC BAA-1463 / DSM 18972 / AmH), this protein is Elongation factor Ts.